The sequence spans 68 residues: UPF0434 protein BTH_I0741 (68 aa).

Belongs to the UPF0434 family.

The sequence is that of UPF0434 protein BTH_I0741 from Burkholderia thailandensis (strain ATCC 700388 / DSM 13276 / CCUG 48851 / CIP 106301 / E264).